A 198-amino-acid polypeptide reads, in one-letter code: 3-isopropylmalate dehydratase small subunit (198 aa).

The protein belongs to the LeuD family. LeuD type 1 subfamily. Heterodimer of LeuC and LeuD.

It carries out the reaction (2R,3S)-3-isopropylmalate = (2S)-2-isopropylmalate. Its pathway is amino-acid biosynthesis; L-leucine biosynthesis; L-leucine from 3-methyl-2-oxobutanoate: step 2/4. Its function is as follows. Catalyzes the isomerization between 2-isopropylmalate and 3-isopropylmalate, via the formation of 2-isopropylmaleate. The sequence is that of 3-isopropylmalate dehydratase small subunit from Mycolicibacterium paratuberculosis (strain ATCC BAA-968 / K-10) (Mycobacterium paratuberculosis).